Here is a 363-residue protein sequence, read N- to C-terminus: 3-dehydroquinate synthase (363 aa).

NAD(+) contacts are provided by residues 70–75 (SGETSK), 104–108 (GVIGD), 128–129 (TT), K141, K150, and 168–171 (TLDT). 3 residues coordinate Zn(2+): E183, H245, and H262.

The protein belongs to the sugar phosphate cyclases superfamily. Dehydroquinate synthase family. Co(2+) serves as cofactor. Zn(2+) is required as a cofactor. Requires NAD(+) as cofactor.

The protein localises to the cytoplasm. The enzyme catalyses 7-phospho-2-dehydro-3-deoxy-D-arabino-heptonate = 3-dehydroquinate + phosphate. The protein operates within metabolic intermediate biosynthesis; chorismate biosynthesis; chorismate from D-erythrose 4-phosphate and phosphoenolpyruvate: step 2/7. In terms of biological role, catalyzes the conversion of 3-deoxy-D-arabino-heptulosonate 7-phosphate (DAHP) to dehydroquinate (DHQ). This is 3-dehydroquinate synthase from Alkaliphilus oremlandii (strain OhILAs) (Clostridium oremlandii (strain OhILAs)).